Here is a 249-residue protein sequence, read N- to C-terminus: MWQLLLPTALVLTAFSGIQAGLQKAVVNLDPKWVRVLEEDSVTLRCQGTFSPEDNSIKWFHNESLIPHQDANYVIQSARVKDSGMYRCQTALSTISDPVQLEVHMGWLLLQTTKWLFQEGDPIHLRCHSWQNRPVRKVTYLQNGKGKKYFHENSELLIPKATHNDSGSYFCRGLIGHNNKSSASFRISLGDPGSPSMFPPWHQITFCLLIGLLFAIDTVLYFSVRRGLQSPVADYEEPKIQWSKEPQDK.

The first 20 residues, 1 to 20, serve as a signal peptide directing secretion; it reads MWQLLLPTALVLTAFSGIQA. The Extracellular portion of the chain corresponds to 21-203; the sequence is GLQKAVVNLD…SPSMFPPWHQ (183 aa). 2 consecutive Ig-like C2-type domains span residues 22-102 and 119-188; these read LQKA…VQLE and EGDP…FRIS. 2 disulfide bridges follow: Cys46–Cys88 and Cys127–Cys171. N-linked (GlcNAc...) asparagine glycans are attached at residues Asn62, Asn164, and Asn179. Residues 204-224 traverse the membrane as a helical segment; sequence ITFCLLIGLLFAIDTVLYFSV. The Cytoplasmic portion of the chain corresponds to 225 to 249; that stretch reads RRGLQSPVADYEEPKIQWSKEPQDK. Tyr235 bears the Phosphotyrosine mark.

In terms of assembly, forms a heterooligomeric complex with ITAM-containing signaling subunits FCER1G. Interacts (via transmembrane domain) with signaling subunits; this interaction is a prerequisite for receptor complex expression on the cell surface and intracellular signal transduction. Binds the Fc region of antigen-complexed IgG. Post-translationally, N-glycosylated. In terms of processing, phosphorylated following receptor ligation. In terms of tissue distribution, detected on myeloid cells, peripheral blood monocytes, splenic and bone marrow dendritic cells, and thioglycollate-elicited macrophages and neutrophils but absent from lymphoid populations with no expression observed on T cells, B cells, NK cells or other granulocytes (at protein level). Expressed in peripheral blood leukocytes, spleen, liver, thymus and small intestine. Expressed in splenic dendritic cell subsets (at protein level).

It is found in the cell membrane. Receptor for the invariable Fc fragment of immunoglobulin gamma (IgG). Binds with intermediate affinity to both IgG2a and IgG2b. Can bind to IgG2a and IgG2b monomers. Does not display binding to IgG1 or IgG3. Recognizes neutralizing virus-specific IgGs displayed on the cell surface of infected cells and triggers antibody-dependent cellular cytotoxicity (ADCC). Confers protection to lethal influenza virus infection. On splenic dendritic cells, uptakes antigen immune complexes and efficiently divert them into MHC class I and II antigen presentation pathways to provide for superior priming of CD4-positive and CD8-positive T cell immune responses. Mediates neutrophil activation by IgG complexes redundantly with FCGR2A. Plays a role in promoting bone resorption by enhancing osteoclast differentiation following binding to IgG2a. Also acts as a receptor for the Fc region of immunoglobulin epsilon (IgE). Binds with low affinity to both the a and b allotypes of IgE. Has also been shown to bind to IgE allotype a only but not to allotype b. Binds aggregated IgE but not the monomeric form and bound monomeric IgG is readily displaced by IgE complexes. Binding to IgE promotes macrophage-mediated phagocytosis, antigen presentation to T cells, production of pro-inflammatory cytokines and the late phase of cutaneous allergic reactions. Mediates enhanced ADCC in response to afucosylated IgGs. In Mus musculus (Mouse), this protein is Low affinity immunoglobulin gamma Fc region receptor III-A.